The following is a 542-amino-acid chain: CTP synthase (542 aa).

Residues 1–265 (MTRYVFITGG…DREVLALFGI (265 aa)) form an amidoligase domain region. Residue Ser13 participates in CTP binding. UTP is bound at residue Ser13. ATP contacts are provided by residues 14–19 (SLGKGL) and Asp71. Mg(2+) is bound by residues Asp71 and Glu139. Residues 146-148 (DIE), 186-191 (KTKPTQ), and Lys222 contribute to the CTP site. UTP is bound by residues 186-191 (KTKPTQ) and Lys222. 238–240 (RDV) contributes to the ATP binding site. The region spanning 291-541 (SIAIVGKYTG…IGAAVVQSRL (251 aa)) is the Glutamine amidotransferase type-1 domain. Gly353 is an L-glutamine binding site. Residue Cys380 is the Nucleophile; for glutamine hydrolysis of the active site. L-glutamine contacts are provided by residues 381-384 (FGMQ), Glu404, and Arg469. Catalysis depends on residues His514 and Glu516.

This sequence belongs to the CTP synthase family. Homotetramer.

It carries out the reaction UTP + L-glutamine + ATP + H2O = CTP + L-glutamate + ADP + phosphate + 2 H(+). The enzyme catalyses L-glutamine + H2O = L-glutamate + NH4(+). The catalysed reaction is UTP + NH4(+) + ATP = CTP + ADP + phosphate + 2 H(+). It functions in the pathway pyrimidine metabolism; CTP biosynthesis via de novo pathway; CTP from UDP: step 2/2. With respect to regulation, allosterically activated by GTP, when glutamine is the substrate; GTP has no effect on the reaction when ammonia is the substrate. The allosteric effector GTP functions by stabilizing the protein conformation that binds the tetrahedral intermediate(s) formed during glutamine hydrolysis. Inhibited by the product CTP, via allosteric rather than competitive inhibition. Its function is as follows. Catalyzes the ATP-dependent amination of UTP to CTP with either L-glutamine or ammonia as the source of nitrogen. Regulates intracellular CTP levels through interactions with the four ribonucleotide triphosphates. The chain is CTP synthase from Methylobacterium nodulans (strain LMG 21967 / CNCM I-2342 / ORS 2060).